The chain runs to 242 residues: MDIKLKDFEGPLDLLLHLVSKYQMDIYDVPITEVIEQYLAYVSTLQAMRLEVTGEYMVMASQLMLIKSRKLLPKVAEVTDLGDDLEQDLLSQIEEYRKFKLLGEHLESKHQERAQYYSKAPTELIYEDAELVHDKTTIDLFLAFSNILAKKKEEFAQNHTTILRDEYKIEDMMIIVKESLIGRDQLRLQDLFKEAQNVQEVITLFLATLELIKTQELILVQEESFGDIYLMEKKEESQVPQS.

This sequence belongs to the ScpA family. In terms of assembly, component of a cohesin-like complex composed of ScpA, ScpB and the Smc homodimer, in which ScpA and ScpB bind to the head domain of Smc. The presence of the three proteins is required for the association of the complex with DNA.

It is found in the cytoplasm. Participates in chromosomal partition during cell division. May act via the formation of a condensin-like complex containing Smc and ScpB that pull DNA away from mid-cell into both cell halves. This Streptococcus pneumoniae (strain Taiwan19F-14) protein is Segregation and condensation protein A.